A 742-amino-acid chain; its full sequence is Glycine--tRNA ligase (742 aa).

The 57-residue stretch at 73–129 (KLAPLRAAVKEYGDLIRDLKAKGAPKIDIDKAVVELKARKRLLEDTEIALAPKEASF) folds into the WHEP-TRS domain. Glutamate 309 is a glycine binding site. ATP contacts are provided by residues 341–343 (RNE) and 352–353 (RV). Position 360 (glutamate 360) interacts with glycine. 467–468 (EC) serves as a coordination point for ATP. 586–588 (EPS) serves as a coordination point for glycine. An ATP-binding site is contributed by arginine 593.

This sequence belongs to the class-II aminoacyl-tRNA synthetase family. In terms of assembly, homodimer.

The protein resides in the cytoplasm. It is found in the cell projection. Its subcellular location is the axon. It localises to the secreted. The protein localises to the extracellular exosome. It carries out the reaction tRNA(Gly) + glycine + ATP = glycyl-tRNA(Gly) + AMP + diphosphate. It catalyses the reaction 2 ATP + H(+) = P(1),P(4)-bis(5'-adenosyl) tetraphosphate + diphosphate. Its function is as follows. Catalyzes the ATP-dependent ligation of glycine to the 3'-end of its cognate tRNA, via the formation of an aminoacyl-adenylate intermediate (Gly-AMP). Also produces diadenosine tetraphosphate (Ap4A), a universal pleiotropic signaling molecule needed for cell regulation pathways, by direct condensation of 2 ATPs. Thereby, may play a special role in Ap4A homeostasis. In Caenorhabditis elegans, this protein is Glycine--tRNA ligase.